A 445-amino-acid chain; its full sequence is DNA primase DnaG (445 aa).

Positions 166-252 (DAIVVVEGRS…SVEDLSRSEV (87 aa)) constitute a Toprim domain. Mg(2+) contacts are provided by E172, D214, and D216. A disordered region spans residues 276–355 (EEMSQAGEST…NGDGPTIPSL (80 aa)). The segment covering 284-298 (STTADGGAVAAATSD) has biased composition (low complexity). The span at 303–313 (NQPSPSSQTGS) shows a compositional bias: polar residues. Residues 324-337 (SVVDNSNATAVADA) show a composition bias toward low complexity.

The protein belongs to the archaeal DnaG primase family. In terms of assembly, forms a ternary complex with MCM helicase and DNA. It depends on Mg(2+) as a cofactor.

The catalysed reaction is ssDNA + n NTP = ssDNA/pppN(pN)n-1 hybrid + (n-1) diphosphate.. Its function is as follows. RNA polymerase that catalyzes the synthesis of short RNA molecules used as primers for DNA polymerase during DNA replication. This is DNA primase DnaG from Haloarcula marismortui (strain ATCC 43049 / DSM 3752 / JCM 8966 / VKM B-1809) (Halobacterium marismortui).